A 398-amino-acid polypeptide reads, in one-letter code: uncharacterized protein (398 aa).

This is an uncharacterized protein from Buchnera aphidicola subsp. Baizongia pistaciae (strain Bp).